A 264-amino-acid chain; its full sequence is Thymidylate synthase (264 aa).

Residue R21 participates in dUMP binding. H51 lines the (6R)-5,10-methylene-5,6,7,8-tetrahydrofolate pocket. 126-127 (RR) is a binding site for dUMP. The active-site Nucleophile is the C146. DUMP-binding positions include 166–169 (RSAD), N177, and 207–209 (HIY). D169 contributes to the (6R)-5,10-methylene-5,6,7,8-tetrahydrofolate binding site. A263 contacts (6R)-5,10-methylene-5,6,7,8-tetrahydrofolate.

It belongs to the thymidylate synthase family. Bacterial-type ThyA subfamily. Homodimer.

Its subcellular location is the cytoplasm. The catalysed reaction is dUMP + (6R)-5,10-methylene-5,6,7,8-tetrahydrofolate = 7,8-dihydrofolate + dTMP. It participates in pyrimidine metabolism; dTTP biosynthesis. Catalyzes the reductive methylation of 2'-deoxyuridine-5'-monophosphate (dUMP) to 2'-deoxythymidine-5'-monophosphate (dTMP) while utilizing 5,10-methylenetetrahydrofolate (mTHF) as the methyl donor and reductant in the reaction, yielding dihydrofolate (DHF) as a by-product. This enzymatic reaction provides an intracellular de novo source of dTMP, an essential precursor for DNA biosynthesis. The protein is Thymidylate synthase of Methylobacillus flagellatus (strain ATCC 51484 / DSM 6875 / VKM B-1610 / KT).